We begin with the raw amino-acid sequence, 73 residues long: Ubiquitin-like modifier HUB1 (73 aa).

Positions 1–73 (MIEVVVNDRL…DQTNLELYYL (73 aa)) constitute a Ubiquitin-like domain.

Functionally, forms conjugate with SPH1 and HBT1. Involved in morphogenesis. In Saccharomyces cerevisiae (strain ATCC 204508 / S288c) (Baker's yeast), this protein is Ubiquitin-like modifier HUB1 (HUB1).